Consider the following 141-residue polypeptide: Nucleoside diphosphate kinase (141 aa).

ATP is bound by residues lysine 11, phenylalanine 59, arginine 87, threonine 93, arginine 104, and asparagine 114. Histidine 117 acts as the Pros-phosphohistidine intermediate in catalysis.

This sequence belongs to the NDK family. Homotetramer. The cofactor is Mg(2+).

The protein resides in the cytoplasm. The catalysed reaction is a 2'-deoxyribonucleoside 5'-diphosphate + ATP = a 2'-deoxyribonucleoside 5'-triphosphate + ADP. It carries out the reaction a ribonucleoside 5'-diphosphate + ATP = a ribonucleoside 5'-triphosphate + ADP. In terms of biological role, major role in the synthesis of nucleoside triphosphates other than ATP. The ATP gamma phosphate is transferred to the NDP beta phosphate via a ping-pong mechanism, using a phosphorylated active-site intermediate. The polypeptide is Nucleoside diphosphate kinase (Albidiferax ferrireducens (strain ATCC BAA-621 / DSM 15236 / T118) (Rhodoferax ferrireducens)).